The primary structure comprises 258 residues: Uroplakin-1a (258 aa).

Residues 1–14 are Cytoplasmic-facing; that stretch reads MASAAAAEAEKGSP. Residues 15 to 35 traverse the membrane as a helical segment; the sequence is VVVGLLVVGNIIILLSGLSLF. Over 36 to 59 the chain is Extracellular; sequence AETIWVTADQYRVYPLMGVSGKDD. Residues 60 to 86 traverse the membrane as a helical segment; the sequence is VFAGAWIAIFCGFSFFMVASFGVGAAL. Residues 87–91 lie on the Cytoplasmic side of the membrane; the sequence is CRRRS. Residues 92-112 form a helical membrane-spanning segment; the sequence is MVLTYLVLMLIVYIFECASCI. Residues 113–230 lie on the Extracellular side of the membrane; that stretch reads TSYTHRDYMV…HIGHAIDSYT (118 aa). A glycan (N-linked (GlcNAc...) asparagine) is linked at asparagine 170. A helical transmembrane segment spans residues 231–252; it reads WGISWFGFAILMWTLPVMLIAM. The Cytoplasmic portion of the chain corresponds to 253–258; sequence YFYTML.

It belongs to the tetraspanin (TM4SF) family. As to quaternary structure, homodimer; disulfide-linked. Interacts with uroplakin-2 (UPK2). High expression restricted to ureteric urothelium (most superficial cells); low expression in prostate. Expression in normal urothelial cells is lost in culture. Some expression in tumor cell lines derived from urothelial malignancies.

The protein resides in the membrane. Its function is as follows. Component of the asymmetric unit membrane (AUM); a highly specialized biomembrane elaborated by terminally differentiated urothelial cells. May play an important role in normal bladder epithelial physiology, possibly in regulating membrane permeability of superficial umbrella cells or in stabilizing the apical membrane through AUM/cytoskeletal interactions. The sequence is that of Uroplakin-1a (UPK1A) from Homo sapiens (Human).